Here is a 259-residue protein sequence, read N- to C-terminus: Deoxyribose-phosphate aldolase (259 aa).

The active-site Proton donor/acceptor is the D102. Catalysis depends on K167, which acts as the Schiff-base intermediate with acetaldehyde. The active-site Proton donor/acceptor is the K201.

It belongs to the DeoC/FbaB aldolase family. DeoC type 2 subfamily.

The protein resides in the cytoplasm. The enzyme catalyses 2-deoxy-D-ribose 5-phosphate = D-glyceraldehyde 3-phosphate + acetaldehyde. It participates in carbohydrate degradation; 2-deoxy-D-ribose 1-phosphate degradation; D-glyceraldehyde 3-phosphate and acetaldehyde from 2-deoxy-alpha-D-ribose 1-phosphate: step 2/2. In terms of biological role, catalyzes a reversible aldol reaction between acetaldehyde and D-glyceraldehyde 3-phosphate to generate 2-deoxy-D-ribose 5-phosphate. The protein is Deoxyribose-phosphate aldolase of Escherichia coli (strain SMS-3-5 / SECEC).